An 889-amino-acid polypeptide reads, in one-letter code: Cytoplasmic aconitate hydratase (889 aa).

Residues Q86 and 205-207 (DSH) contribute to the substrate site. The [4Fe-4S] cluster site is built by C437, C503, and C506. Substrate contacts are provided by R536 and R541. T628 is modified (phosphothreonine). Substrate-binding positions include R699 and 779–780 (SR).

Belongs to the aconitase/IPM isomerase family. Interacts (when associated with the 4Fe-4S) with FBXL5. Interacts with frataxin(81-210). Requires [4Fe-4S] cluster as cofactor.

It is found in the cytoplasm. The protein localises to the cytosol. It carries out the reaction citrate = D-threo-isocitrate. Bifunctional iron sensor that switches between 2 activities depending on iron availability. Iron deprivation, promotes its mRNA binding activity through which it regulates the expression of genes involved in iron uptake, sequestration and utilization. Binds to iron-responsive elements (IRES) in the untranslated region of target mRNAs preventing for instance the translation of ferritin and aminolevulinic acid synthase and stabilizing the transferrin receptor mRNA. In terms of biological role, conversely, when cellular iron levels are high, binds a 4Fe-4S cluster which precludes RNA binding activity and promotes the aconitase activity, the isomerization of citrate to isocitrate via cis-aconitate. The chain is Cytoplasmic aconitate hydratase (ACO1) from Homo sapiens (Human).